Consider the following 216-residue polypeptide: MRVAIIDYGSGNLRSATKAFERAAREAGIAAEIDLTDRPERVATADRIVLPGVGAYADCRRGLAVVEGMEEALTEAVEKTGRPFFGICVGMQLMSSRGLEKTVTKGFGWIAGDVVGMTPEDPSLKIPQIGWNTLDLKRPHPLFDGIPTGENGLHAYFVHSYHLAAERAEDVVAEAGYGGPVTAFVARDNKAGSQFHPEKSQALGLALISNFLRWKP.

Residues 2 to 216 form the Glutamine amidotransferase type-1 domain; it reads RVAIIDYGSG…LISNFLRWKP (215 aa). C88 serves as the catalytic Nucleophile. Residues H196 and E198 contribute to the active site.

Heterodimer of HisH and HisF.

The protein resides in the cytoplasm. The catalysed reaction is 5-[(5-phospho-1-deoxy-D-ribulos-1-ylimino)methylamino]-1-(5-phospho-beta-D-ribosyl)imidazole-4-carboxamide + L-glutamine = D-erythro-1-(imidazol-4-yl)glycerol 3-phosphate + 5-amino-1-(5-phospho-beta-D-ribosyl)imidazole-4-carboxamide + L-glutamate + H(+). The enzyme catalyses L-glutamine + H2O = L-glutamate + NH4(+). It participates in amino-acid biosynthesis; L-histidine biosynthesis; L-histidine from 5-phospho-alpha-D-ribose 1-diphosphate: step 5/9. In terms of biological role, IGPS catalyzes the conversion of PRFAR and glutamine to IGP, AICAR and glutamate. The HisH subunit catalyzes the hydrolysis of glutamine to glutamate and ammonia as part of the synthesis of IGP and AICAR. The resulting ammonia molecule is channeled to the active site of HisF. The sequence is that of Imidazole glycerol phosphate synthase subunit HisH from Rhizobium meliloti (strain 1021) (Ensifer meliloti).